The following is a 1094-amino-acid chain: DNA polymerase delta catalytic subunit (1094 aa).

Zn(2+) contacts are provided by Cys-1003, Cys-1006, Cys-1016, and Cys-1019. The CysA-type zinc-finger motif lies at 1003 to 1019 (CIGCNSSIKKPPLCNHC). [4Fe-4S] cluster contacts are provided by Cys-1049, Cys-1052, Cys-1062, and Cys-1067. The CysB motif signature appears at 1049–1067 (CQRCQGNLHVDVICMNRDC).

This sequence belongs to the DNA polymerase type-B family. As to quaternary structure, heterodimer composed of a catalytic subunit POLD and a small regulatory subunit. Requires [4Fe-4S] cluster as cofactor. Mg(2+) serves as cofactor.

The protein resides in the nucleus. It catalyses the reaction DNA(n) + a 2'-deoxyribonucleoside 5'-triphosphate = DNA(n+1) + diphosphate. The small regulatory subunit delta and PCNA1 increase POLD catalytic activity. This polymerase possesses two enzymatic activities: DNA synthesis (polymerase) and an exonucleolytic activity that degrades single-stranded DNA in the 3'- to 5'-direction. The protein is DNA polymerase delta catalytic subunit (POLD) of Plasmodium falciparum (isolate K1 / Thailand).